Here is a 436-residue protein sequence, read N- to C-terminus: Eukaryotic translation initiation factor 4B (436 aa).

A disordered region spans residues Ala56 to Ala98. Phosphoserine occurs at positions 65 and 71. One can recognise an RRM domain in the interval Tyr101–Pro183. Positions Arg185 to Asn406 are disordered. One copy of the 1; approximate repeat lies at Asp190–Pro210. The segment at Asp190–Phe350 is 7 X approximate tandem repeats. 5 tandem repeats follow at residues Asp211–Val232, Asp233–Val258, Asp259–Pro284, Asp285–Pro310, and Asp311–Leu340. A compositionally biased stretch (basic and acidic residues) spans Pro329–Pro338. The 7; truncated repeat unit spans residues Asp341 to Phe350. Composition is skewed to basic and acidic residues over residues Thr359–Lys376 and Glu397–Asn406.

Functionally, involved in translation initiation. May be the homolog of mammalian eIF4B and be part of an RNA helicase. STM1/TIF3 is a non-essential gene. The sequence is that of Eukaryotic translation initiation factor 4B (TIF3) from Saccharomyces cerevisiae (strain ATCC 204508 / S288c) (Baker's yeast).